The following is a 347-amino-acid chain: Dihydroorotase (347 aa).

Histidine 14 and histidine 16 together coordinate Zn(2+). Substrate is bound by residues 16–18 (HLR) and asparagine 42. Lysine 100, histidine 137, and histidine 175 together coordinate Zn(2+). Lysine 100 carries the N6-carboxylysine modification. Histidine 137 contributes to the substrate binding site. Leucine 220 is a substrate binding site. Aspartate 248 is a binding site for Zn(2+). Residue aspartate 248 is part of the active site. Substrate contacts are provided by histidine 252 and alanine 264.

Belongs to the metallo-dependent hydrolases superfamily. DHOase family. Class II DHOase subfamily. As to quaternary structure, homodimer. Zn(2+) is required as a cofactor.

It carries out the reaction (S)-dihydroorotate + H2O = N-carbamoyl-L-aspartate + H(+). It functions in the pathway pyrimidine metabolism; UMP biosynthesis via de novo pathway; (S)-dihydroorotate from bicarbonate: step 3/3. Functionally, catalyzes the reversible cyclization of carbamoyl aspartate to dihydroorotate. The polypeptide is Dihydroorotase (Pseudomonas savastanoi pv. phaseolicola (strain 1448A / Race 6) (Pseudomonas syringae pv. phaseolicola (strain 1448A / Race 6))).